A 394-amino-acid polypeptide reads, in one-letter code: Protein-glutamate methylesterase/protein-glutamine glutaminase 2 (394 aa).

The Response regulatory domain maps to 4 to 121 (KVLVVDDSSF…ARNRDEAISL (118 aa)). Position 55 is a 4-aspartylphosphate (aspartate 55). Residues 202–394 (SGKKYQLMAI…AERILVEVGR (193 aa)) form the CheB-type methylesterase domain. Catalysis depends on residues serine 214, histidine 241, and aspartate 337.

Belongs to the CheB family. Post-translationally, phosphorylated by CheA. Phosphorylation of the N-terminal regulatory domain activates the methylesterase activity.

Its subcellular location is the cytoplasm. The catalysed reaction is [protein]-L-glutamate 5-O-methyl ester + H2O = L-glutamyl-[protein] + methanol + H(+). The enzyme catalyses L-glutaminyl-[protein] + H2O = L-glutamyl-[protein] + NH4(+). Involved in chemotaxis. Part of a chemotaxis signal transduction system that modulates chemotaxis in response to various stimuli. Catalyzes the demethylation of specific methylglutamate residues introduced into the chemoreceptors (methyl-accepting chemotaxis proteins or MCP) by CheR. Also mediates the irreversible deamidation of specific glutamine residues to glutamic acid. This chain is Protein-glutamate methylesterase/protein-glutamine glutaminase 2, found in Photobacterium profundum (strain SS9).